The chain runs to 564 residues: Dihydroxy-acid dehydratase (564 aa).

Cys-55 lines the [2Fe-2S] cluster pocket. Asp-87 is a Mg(2+) binding site. Residue Cys-128 coordinates [2Fe-2S] cluster. Residues Asp-129 and Lys-130 each contribute to the Mg(2+) site. Lys-130 carries the N6-carboxylysine modification. Cys-200 serves as a coordination point for [2Fe-2S] cluster. Glu-452 contributes to the Mg(2+) binding site. Ser-478 serves as the catalytic Proton acceptor.

This sequence belongs to the IlvD/Edd family. Homodimer. The cofactor is [2Fe-2S] cluster. Requires Mg(2+) as cofactor.

It catalyses the reaction (2R)-2,3-dihydroxy-3-methylbutanoate = 3-methyl-2-oxobutanoate + H2O. It carries out the reaction (2R,3R)-2,3-dihydroxy-3-methylpentanoate = (S)-3-methyl-2-oxopentanoate + H2O. The protein operates within amino-acid biosynthesis; L-isoleucine biosynthesis; L-isoleucine from 2-oxobutanoate: step 3/4. Its pathway is amino-acid biosynthesis; L-valine biosynthesis; L-valine from pyruvate: step 3/4. Functions in the biosynthesis of branched-chain amino acids. Catalyzes the dehydration of (2R,3R)-2,3-dihydroxy-3-methylpentanoate (2,3-dihydroxy-3-methylvalerate) into 2-oxo-3-methylpentanoate (2-oxo-3-methylvalerate) and of (2R)-2,3-dihydroxy-3-methylbutanoate (2,3-dihydroxyisovalerate) into 2-oxo-3-methylbutanoate (2-oxoisovalerate), the penultimate precursor to L-isoleucine and L-valine, respectively. This is Dihydroxy-acid dehydratase from Albidiferax ferrireducens (strain ATCC BAA-621 / DSM 15236 / T118) (Rhodoferax ferrireducens).